A 648-amino-acid polypeptide reads, in one-letter code: Glutenin, high molecular weight subunit DY10 (648 aa).

Positions 1–21 (MAKRLVLFAAVVIALVALTTA) are cleaved as a signal peptide. Residues 127–648 (YYPGVTSPRQ…EGGDALSASQ (522 aa)) form a disordered region. 3 stretches are compositionally biased toward low complexity: residues 141-166 (PGQASPQQPGQGQQPGKWQEPGQGQQ), 195-236 (QQPG…WQQG), and 243-263 (QQLGQGQQPRQWQQSGQGQQG). Over residues 264–274 (HYPTSLQQPGQ) the composition is skewed to polar residues. Low complexity-rich tracts occupy residues 284–353 (QQQP…GQQG), 360–416 (QQPG…GQQG), 459–502 (QQPG…PGQG), 510–523 (QGYYPTSPQQPGQG), and 531–565 (QGHCPTSPQQSGQAQQPGQGQQIGQVQQPGQGQQG). Over residues 578-592 (QQSGQGQQSGQGHQP) the composition is skewed to gly residues. Low complexity predominate over residues 593–604 (GQGQQSGQEQQG).

Belongs to the gliadin/glutenin family. As to quaternary structure, disulfide-bridge linked aggregates.

Functionally, glutenins are high-molecular weight seed storage proteins of wheat endosperm. Thought to be responsible for the visco-elastic property of wheat dough. The polypeptide is Glutenin, high molecular weight subunit DY10 (GLU-D1-2B) (Triticum aestivum (Wheat)).